The chain runs to 322 residues: Tyrosine recombinase XerC (322 aa).

Residues 1-25 (MPEAAPPVADARGSSPTATTGPGAD) form a disordered region. A compositionally biased stretch (low complexity) spans 16–25 (PTATTGPGAD). The region spanning 25–111 (DATLSAVEPF…ACRSYYAWLL (87 aa)) is the Core-binding (CB) domain. The region spanning 132-309 (KLPQVLDADE…DFQHLAKVYD (178 aa)) is the Tyr recombinase domain. Active-site residues include Arg171, Lys195, His261, Arg264, and His287. Tyr296 functions as the O-(3'-phospho-DNA)-tyrosine intermediate in the catalytic mechanism.

It belongs to the 'phage' integrase family. XerC subfamily. As to quaternary structure, forms a cyclic heterotetrameric complex composed of two molecules of XerC and two molecules of XerD.

Its subcellular location is the cytoplasm. Site-specific tyrosine recombinase, which acts by catalyzing the cutting and rejoining of the recombining DNA molecules. The XerC-XerD complex is essential to convert dimers of the bacterial chromosome into monomers to permit their segregation at cell division. It also contributes to the segregational stability of plasmids. The polypeptide is Tyrosine recombinase XerC (Xanthomonas campestris pv. campestris (strain 8004)).